Consider the following 181-residue polypeptide: NAD(P)H-quinone oxidoreductase subunit 6, chloroplastic (181 aa).

The next 5 helical transmembrane spans lie at 13–33, 35–55, 64–84, 98–118, and 152–172; these read PILY…VFFG, IIYS…LYLL, AQIL…IMLI, FGDI…IIMI, and LLPF…AITI.

The protein belongs to the complex I subunit 6 family. NDH is composed of at least 16 different subunits, 5 of which are encoded in the nucleus.

It localises to the plastid. The protein localises to the chloroplast thylakoid membrane. The enzyme catalyses a plastoquinone + NADH + (n+1) H(+)(in) = a plastoquinol + NAD(+) + n H(+)(out). The catalysed reaction is a plastoquinone + NADPH + (n+1) H(+)(in) = a plastoquinol + NADP(+) + n H(+)(out). NDH shuttles electrons from NAD(P)H:plastoquinone, via FMN and iron-sulfur (Fe-S) centers, to quinones in the photosynthetic chain and possibly in a chloroplast respiratory chain. The immediate electron acceptor for the enzyme in this species is believed to be plastoquinone. Couples the redox reaction to proton translocation, and thus conserves the redox energy in a proton gradient. This chain is NAD(P)H-quinone oxidoreductase subunit 6, chloroplastic (ndhG), found in Staurastrum punctulatum (Green alga).